Reading from the N-terminus, the 457-residue chain is RNA-binding suppressor of PAS kinase protein 1 (457 aa).

Residues 26-88 form the R3H domain; the sequence is RIFIIELENS…SCVILFKGEN (63 aa). Disordered stretches follow at residues 142-181, 195-291, and 406-457; these read IDGN…IEKE, LNKS…NGGY, and FQGK…KLNI. The segment covering 145–158 has biased composition (polar residues); that stretch reads NTRTPNSNLTANSN. The span at 159–181 shows a compositional bias: basic and acidic residues; it reads KDQKIEIDDKSSTDLEQERIEKE. At serine 198 the chain carries Phosphoserine. The segment covering 226-247 has biased composition (low complexity); it reads SNTQTSNGSVSSSSPFNSSVTT. A compositionally biased stretch (polar residues) spans 248–258; it reads IQVNKPQQQFY. Residues 418 to 435 show a composition bias toward basic and acidic residues; sequence KRSDDSNSNKNEGIRRAS. Residues serine 435, serine 439, and serine 447 each carry the phosphoserine modification. Residues 443-457 show a composition bias toward basic and acidic residues; sequence RDTDSVEMKFDKLNI.

The protein resides in the cytoplasm. This is RNA-binding suppressor of PAS kinase protein 1 (RBS1) from Saccharomyces cerevisiae (strain ATCC 204508 / S288c) (Baker's yeast).